Reading from the N-terminus, the 80-residue chain is Exodeoxyribonuclease 7 small subunit (80 aa).

The protein belongs to the XseB family. As to quaternary structure, heterooligomer composed of large and small subunits.

Its subcellular location is the cytoplasm. It catalyses the reaction Exonucleolytic cleavage in either 5'- to 3'- or 3'- to 5'-direction to yield nucleoside 5'-phosphates.. Bidirectionally degrades single-stranded DNA into large acid-insoluble oligonucleotides, which are then degraded further into small acid-soluble oligonucleotides. This Rickettsia bellii (strain OSU 85-389) protein is Exodeoxyribonuclease 7 small subunit.